Consider the following 291-residue polypeptide: 3-hydroxy-5-phosphonooxypentane-2,4-dione thiolase (291 aa).

Catalysis depends on Lys-203, which acts as the Schiff-base intermediate with substrate.

The protein belongs to the DeoC/FbaB aldolase family. In terms of assembly, homodecamer.

The protein localises to the cytoplasm. The enzyme catalyses dihydroxyacetone phosphate + acetyl-CoA = 3-hydroxy-2,4-dioxopentyl phosphate + CoA. In terms of biological role, involved in the degradation of phospho-AI-2, thereby terminating induction of the lsr operon and closing the AI-2 signaling cycle. Catalyzes the transfer of an acetyl moiety from 3-hydroxy-5-phosphonooxypentane-2,4-dione to CoA to form glycerone phosphate and acetyl-CoA. In Yersinia enterocolitica serotype O:8 / biotype 1B (strain NCTC 13174 / 8081), this protein is 3-hydroxy-5-phosphonooxypentane-2,4-dione thiolase.